The sequence spans 445 residues: DNA repair protein RadA (445 aa).

A C4-type zinc finger spans residues 10-27; the sequence is CSNCANISHKWSGQCFDC. 90–97 lines the ATP pocket; that stretch reads GEPGIGKS. A RadA KNRFG motif motif is present at residues 249–253; that stretch reads KNRFG. Positions 348–445 are lon-protease-like; it reads EIYLSIAGGL…HLQDLKEIIK (98 aa).

This sequence belongs to the RecA family. RadA subfamily.

In terms of biological role, DNA-dependent ATPase involved in processing of recombination intermediates, plays a role in repairing DNA breaks. Stimulates the branch migration of RecA-mediated strand transfer reactions, allowing the 3' invading strand to extend heteroduplex DNA faster. Binds ssDNA in the presence of ADP but not other nucleotides, has ATPase activity that is stimulated by ssDNA and various branched DNA structures, but inhibited by SSB. Does not have RecA's homology-searching function. In Rickettsia typhi (strain ATCC VR-144 / Wilmington), this protein is DNA repair protein RadA.